A 449-amino-acid polypeptide reads, in one-letter code: Glutamate--tRNA ligase 2 (449 aa).

Residues 11-21 carry the 'HIGH' region motif; the sequence is PSPTGFLHIGN. The short motif at 242–246 is the 'KMSKS' region element; that stretch reads GLSKR. Residue Lys-245 participates in ATP binding.

Belongs to the class-I aminoacyl-tRNA synthetase family. Glutamate--tRNA ligase type 1 subfamily. As to quaternary structure, monomer.

The protein resides in the cytoplasm. The catalysed reaction is tRNA(Glu) + L-glutamate + ATP = L-glutamyl-tRNA(Glu) + AMP + diphosphate. In terms of biological role, catalyzes the attachment of glutamate to tRNA(Glu) in a two-step reaction: glutamate is first activated by ATP to form Glu-AMP and then transferred to the acceptor end of tRNA(Glu). This is Glutamate--tRNA ligase 2 from Methylorubrum populi (strain ATCC BAA-705 / NCIMB 13946 / BJ001) (Methylobacterium populi).